Consider the following 1630-residue polypeptide: Patronin (1630 aa).

The region spanning 156 to 288 (QSYEQALLGW…LVVLLTDLFN (133 aa)) is the Calponin-homology (CH) domain. Disordered regions lie at residues 311 to 333 (NSFGGGLNRRSTPPNEYQTVQSN) and 355 to 446 (ASMH…DQLN). A compositionally biased stretch (polar residues) spans 319 to 333 (RRSTPPNEYQTVQSN). A Phosphothreonine modification is found at threonine 322. Over residues 358 to 394 (HSQQQQQLHQQQQHQQQYHQQPLQQHPSQSQLQIQQQ) the composition is skewed to low complexity. Residues 404–419 (QAKEKTNVESKADERG) are compositionally biased toward basic and acidic residues. Phosphoserine occurs at positions 422, 431, 441, 460, 463, and 466. Residues 432-446 (QLTIENFGGSQDQLN) are compositionally biased toward polar residues. Residues 486–589 (LQLGYDTDSG…SMPASPAAWQ (104 aa)) form a disordered region. A Phosphothreonine modification is found at threonine 492. Residues serine 494, serine 496, serine 513, and serine 530 each carry the phosphoserine modification. Residues 495–507 (GSEKQDRETEKYS) are compositionally biased toward basic and acidic residues. Polar residues predominate over residues 513-529 (SVDNVPTVSSHNLSNAG). Over residues 576–587 (SSTSSMPASPAA) the composition is skewed to low complexity. Residues 601 to 639 (ENASKLSTIRMKLEEKRRRIEQDKRKIEMALLRHQEKED) are a coiled coil. Disordered stretches follow at residues 726 to 753 (VSAYSSRPPSRDPYQQQLHHQQQQPMPM), 872 to 967 (QQHQ…GMPM), 1005 to 1042 (DFVHQQQQQHQHQQQLQQQQRLQGHSGRGSSSEDYDSG), 1055 to 1186 (NLTY…NKYT), 1200 to 1241 (GAMS…NAEA), 1284 to 1315 (EAKARKEIEASQKREKEREKEEERARKKEEQM), and 1335 to 1459 (EREG…GVER). 2 stretches are compositionally biased toward low complexity: residues 738–750 (PYQQQLHHQQQQP) and 872–896 (QQHQKQKQTWMNRPPSSAGAPSPGS). A compositionally biased stretch (gly residues) spans 902–914 (NGGGGGGGGGGGE). Positions 919-947 (FQVQASPQHGQRQVSGSNGVQRQQSLTNL) are enriched in polar residues. Low complexity-rich tracts occupy residues 956–967 (PQNMGMPMGMPM) and 1008–1036 (HQQQQQHQHQQQLQQQQRLQGHSGRGSSS). A phosphoserine mark is found at serine 1034, serine 1035, serine 1036, and serine 1067. The segment covering 1065-1074 (RPSIQANSFQ) has biased composition (polar residues). A compositionally biased stretch (basic residues) spans 1105-1116 (RPKPPLRAKRSP). Positions 1167-1184 (GLNNSNSVKSPGNATYNK) are enriched in polar residues. Over residues 1218–1230 (QSPQQTQQPMSPT) the composition is skewed to low complexity. Residues serine 1219 and serine 1228 each carry the phosphoserine modification. A coiled-coil region spans residues 1277–1343 (QRRQQQEEAK…AEREGKTLDR (67 aa)). Residues 1335–1348 (EREGKTLDRPDLHV) are compositionally biased toward basic and acidic residues. Over residues 1363–1374 (RQQRTTRPRPKT) the composition is skewed to basic residues. The span at 1382-1400 (VDISEASSISSRGKKGSSS) shows a compositional bias: low complexity. Serine 1398, serine 1399, and serine 1400 each carry phosphoserine. Residues 1401–1412 (NLTGYGQLSSNS) show a composition bias toward polar residues. Over residues 1450 to 1459 (TSREPAGVER) the composition is skewed to basic and acidic residues. One can recognise a CKK domain in the interval 1489 to 1623 (GPKLYKQPAA…QGKRVQLPSK (135 aa)).

The protein belongs to the CAMSAP1 family. Interacts with msps. Associates with the minus end of the microtubules.

The protein localises to the cytoplasm. It localises to the cytoskeleton. Its subcellular location is the microtubule organizing center. It is found in the spindle pole body. The protein resides in the centrosome. The protein localises to the perinuclear region. In terms of biological role, key microtubule-organizing protein that specifically binds the minus-end of microtubules and regulates their dynamics and organization. Involved in mitotic spindle assembly. Regulates microtubule (MT) severing. Antagonizes the activity of the kinesin-13 depolymerase Klp10A thereby switching off the depolymerization of the MTs at their pole-associated minus ends, which turns off poleward flux and induces anaphase B spindle elongation. Involved in asymmetric cell division of sensory organ precursor (SOP) cells by playing a role in the asymmetric localization of Sara-expressing endosomes to the pIIa daughter cell but not to the pIIb cell. Klp98A targets Sara-expressing endosomes to the central spindle which is symmetrically arranged in early cell division. During late cytokinesis, central spindle asymmetry is generated by enrichment of Patronin on the pIIb side which protects microtubules from depolymerization by Klp10A while unprotected microtubules on the pIIa side are disassembled by Klp10A, leading to the asymmetric delivery of Sara-expressing endosomes to the pIIa daughter cell. In fat body cells, part of perinuclear non-centrosomal microtubule-organizing centers (ncMTOCs) which function to accommodate the organization of microtubule (MT) networks to control nuclear positioning and dynein motor-based retrograde endosomal trafficking. Within the ncMTOC, Msp300 and shot anchors the ncMTOC at the nuclear surface and recruits the MT minus-end regulators Patronin and Nin for assembly, anchoring and/or stabilization of circumferential and radial MTs at the ncMTOCs. This protein, and perhaps Nin, recruits msps to the ncMTOC for the gamma-tubulin-independent elongation of radial MTs. The polypeptide is Patronin (Patronin) (Drosophila melanogaster (Fruit fly)).